The primary structure comprises 504 residues: Phosphoenolpyruvate carboxylase (504 aa).

The segment covering 1-16 has biased composition (polar residues); the sequence is MTSRKIPSIMGTQHPD. The interval 1-21 is disordered; sequence MTSRKIPSIMGTQHPDNANAP.

It belongs to the PEPCase type 2 family. Homotetramer. Mg(2+) serves as cofactor.

The catalysed reaction is oxaloacetate + phosphate = phosphoenolpyruvate + hydrogencarbonate. Functionally, catalyzes the irreversible beta-carboxylation of phosphoenolpyruvate (PEP) to form oxaloacetate (OAA), a four-carbon dicarboxylic acid source for the tricarboxylic acid cycle. The polypeptide is Phosphoenolpyruvate carboxylase (Leuconostoc mesenteroides subsp. mesenteroides (strain ATCC 8293 / DSM 20343 / BCRC 11652 / CCM 1803 / JCM 6124 / NCDO 523 / NBRC 100496 / NCIMB 8023 / NCTC 12954 / NRRL B-1118 / 37Y)).